The primary structure comprises 78 residues: Large ribosomal subunit protein bL31 (78 aa).

Zn(2+) is bound by residues Cys-16, Cys-18, Cys-38, and Cys-41.

Belongs to the bacterial ribosomal protein bL31 family. Type A subfamily. Part of the 50S ribosomal subunit. Requires Zn(2+) as cofactor.

Binds the 23S rRNA. This chain is Large ribosomal subunit protein bL31, found in Frankia alni (strain DSM 45986 / CECT 9034 / ACN14a).